A 240-amino-acid chain; its full sequence is Protein OXIDATIVE STRESS 3 LIKE 4 (240 aa).

Residues 1–128 (MELMAKPTFS…SKSFGNLGEI (128 aa)) are disordered. Polar residues predominate over residues 51-66 (WSGQTADYSSDSSSIG). The span at 70-84 (DSEEDEEESENENDD) shows a compositional bias: acidic residues. Residues 142–150 (NKRRRLQIC) carry the Nuclear localization signal motif. The disordered stretch occupies residues 163-207 (NPKSMPLLPVNEDEDDDDEDDDEEDLKSGFDENKSSSDEEGVKKV). Residues 173 to 187 (NEDEDDDDEDDDEED) are compositionally biased toward acidic residues. Residues 188-205 (LKSGFDENKSSSDEEGVK) show a composition bias toward basic and acidic residues. The kinase-inducible domain (KID) stretch occupies residues 202–229 (EGVKKVVVRKGSFKNRAYKSRSCFALSD). At Ser-213 the chain carries Phosphoserine.

Interacts with HDA19; Ser-213 is critical for this interaction.

The protein localises to the nucleus. Its function is as follows. Transcription activator which may regulates gene expression through interaction with the histone deacetylase HDA19. Promotes slightly the tolerance to cadmium (Cd) and to oxidizing chemicals (e.g. diamide and tert-butyl hydroperoxide (t-BOOH)). The protein is Protein OXIDATIVE STRESS 3 LIKE 4 of Arabidopsis thaliana (Mouse-ear cress).